Consider the following 35-residue polypeptide: Alpha-amanitin proprotein 1 (35 aa).

A propeptide spanning residues M1–P10 is cleaved from the precursor. Residue I11 is modified to (3R,4R)-4,5-dihydroxyisoleucine; in form alpha-amanitin. A (3R,4S)-4-hydroxyisoleucine; in form gamma-amanitin modification is found at I11. Residues I11–P18 constitute a cross-link (cyclopeptide (Ile-Pro)). Residues W12–C16 constitute a cross-link (2'-cysteinyl-6'-hydroxytryptophan sulfoxide (Trp-Cys)). Position 18 is a 4-hydroxyproline (P18). Residues C19 to C35 constitute a propeptide that is removed on maturation.

It belongs to the MSDIN fungal toxin family. Post-translationally, processed by the macrocyclase-peptidase enzyme POPB to yield a toxic cyclic octapeptide. POPB first removes 10 residues from the N-terminus. Conformational trapping of the remaining peptide forces the enzyme to release this intermediate rather than proceed to macrocyclization. The enzyme rebinds the remaining peptide in a different conformation and catalyzes macrocyclization of the N-terminal 8 residues. Expressed in basidiocarps.

Major toxin belonging to the bicyclic octapeptides amatoxins that acts by binding non-competitively to RNA polymerase II and greatly slowing the elongation of transcripts from target promoters. In Amanita exitialis (Guangzhou destroying angel), this protein is Alpha-amanitin proprotein 1.